Reading from the N-terminus, the 225-residue chain is Probable 3-keto-L-gulonate-6-phosphate decarboxylase (225 aa).

Asp-11 provides a ligand contact to substrate. Residues Glu-33 and Asp-62 each contribute to the Mg(2+) site. Substrate is bound at residue Arg-202.

It belongs to the HPS/KGPDC family. KGPDC subfamily. As to quaternary structure, homodimer. The cofactor is Mg(2+).

The catalysed reaction is 3-dehydro-L-gulonate 6-phosphate + H(+) = L-xylulose 5-phosphate + CO2. In terms of biological role, catalyzes the decarboxylation of 3-keto-L-gulonate-6-P into L-xylulose-5-P. The sequence is that of Probable 3-keto-L-gulonate-6-phosphate decarboxylase (sgbH) from Haemophilus influenzae (strain ATCC 51907 / DSM 11121 / KW20 / Rd).